The following is a 530-amino-acid chain: Putative sulfate transporter YvdB (530 aa).

10 helical membrane passes run 19–39, 41–61, 68–88, 91–111, 121–141, 164–184, 192–212, 241–261, 313–333, and 384–404; these read LIAG…FAIA, GVEP…ISLF, IGGP…QYGL, LLIA…FKLG, VIVG…IANF, LGTF…ILLV, VPGA…FFPD, MVML…ESIL, AVSP…LLVF, and VLFD…VFFI. Positions 420 to 530 constitute an STAS domain; that stretch reads PVLAKREDPS…FFDHHDEITG (111 aa).

It belongs to the SLC26A/SulP transporter (TC 2.A.53) family.

It is found in the cell membrane. The sequence is that of Putative sulfate transporter YvdB (yvdB) from Bacillus subtilis (strain 168).